Reading from the N-terminus, the 166-residue chain is Cytochrome c-type biogenesis protein CcmE (166 aa).

Residues 1-13 (MNFLPKSRKARRR) are Cytoplasmic-facing. Residues 14-34 (LTILAVAAPVVALAVGLALWG) traverse the membrane as a helical; Signal-anchor for type II membrane protein segment. The Periplasmic segment spans residues 35–166 (MRDAISLFYT…QGYKPGKPNT (132 aa)). Histidine 128 and tyrosine 132 together coordinate heme. The segment at 143 to 166 (EQGEWRGDGQAPSYQGYKPGKPNT) is disordered.

Belongs to the CcmE/CycJ family.

Its subcellular location is the cell inner membrane. In terms of biological role, heme chaperone required for the biogenesis of c-type cytochromes. Transiently binds heme delivered by CcmC and transfers the heme to apo-cytochromes in a process facilitated by CcmF and CcmH. The chain is Cytochrome c-type biogenesis protein CcmE from Caulobacter sp. (strain K31).